A 426-amino-acid polypeptide reads, in one-letter code: Enolase (426 aa).

Glutamine 162 lines the (2R)-2-phosphoglycerate pocket. Residue glutamate 204 is the Proton donor of the active site. Mg(2+) is bound by residues aspartate 241, glutamate 286, and aspartate 313. (2R)-2-phosphoglycerate-binding residues include lysine 338, arginine 367, serine 368, and lysine 389. The active-site Proton acceptor is the lysine 338.

Belongs to the enolase family. The cofactor is Mg(2+).

It is found in the cytoplasm. The protein localises to the secreted. It localises to the cell surface. The catalysed reaction is (2R)-2-phosphoglycerate = phosphoenolpyruvate + H2O. It participates in carbohydrate degradation; glycolysis; pyruvate from D-glyceraldehyde 3-phosphate: step 4/5. Functionally, catalyzes the reversible conversion of 2-phosphoglycerate (2-PG) into phosphoenolpyruvate (PEP). It is essential for the degradation of carbohydrates via glycolysis. The protein is Enolase of Aliarcobacter butzleri (strain RM4018) (Arcobacter butzleri).